We begin with the raw amino-acid sequence, 211 residues long: Leucyl/phenylalanyl-tRNA--protein transferase (211 aa).

This sequence belongs to the L/F-transferase family.

Its subcellular location is the cytoplasm. The enzyme catalyses N-terminal L-lysyl-[protein] + L-leucyl-tRNA(Leu) = N-terminal L-leucyl-L-lysyl-[protein] + tRNA(Leu) + H(+). The catalysed reaction is N-terminal L-arginyl-[protein] + L-leucyl-tRNA(Leu) = N-terminal L-leucyl-L-arginyl-[protein] + tRNA(Leu) + H(+). It carries out the reaction L-phenylalanyl-tRNA(Phe) + an N-terminal L-alpha-aminoacyl-[protein] = an N-terminal L-phenylalanyl-L-alpha-aminoacyl-[protein] + tRNA(Phe). Functionally, functions in the N-end rule pathway of protein degradation where it conjugates Leu, Phe and, less efficiently, Met from aminoacyl-tRNAs to the N-termini of proteins containing an N-terminal arginine or lysine. The chain is Leucyl/phenylalanyl-tRNA--protein transferase from Flavobacterium psychrophilum (strain ATCC 49511 / DSM 21280 / CIP 103535 / JIP02/86).